Here is a 303-residue protein sequence, read N- to C-terminus: Signal recognition particle receptor FtsY (303 aa).

GTP is bound by residues 108 to 115, 190 to 194, and 254 to 257; these read GVNGAGKT, DTAGR, and TKLD.

This sequence belongs to the GTP-binding SRP family. FtsY subfamily. In terms of assembly, part of the signal recognition particle protein translocation system, which is composed of SRP and FtsY. SRP is a ribonucleoprotein composed of Ffh and a 4.5S RNA molecule.

The protein localises to the cell inner membrane. It is found in the cytoplasm. It catalyses the reaction GTP + H2O = GDP + phosphate + H(+). In terms of biological role, involved in targeting and insertion of nascent membrane proteins into the cytoplasmic membrane. Acts as a receptor for the complex formed by the signal recognition particle (SRP) and the ribosome-nascent chain (RNC). Interaction with SRP-RNC leads to the transfer of the RNC complex to the Sec translocase for insertion into the membrane, the hydrolysis of GTP by both Ffh and FtsY, and the dissociation of the SRP-FtsY complex into the individual components. This chain is Signal recognition particle receptor FtsY, found in Rickettsia conorii (strain ATCC VR-613 / Malish 7).